Reading from the N-terminus, the 529-residue chain is MALKWTSVLLLIHLGCYFSSGSCGKVLVWTGEYSHWMNMKTILKELVQRGHEVTVLASSASILFDPNDAFTLKLEVYPTSLTKTEFENIIMQQVKRWSDIQKDSFWLYFSQEQEILWEFHDIFRNFCKDVVSNKKVMKKLQESRFDIIFADAFFPCGELLAALLNIPFVYSLCFTPGYTIERHSGGLIFPPSYIPVVMSKLSDQMTFMERVKNMIYVLYFDFWFQMCDMKKWDQFYSEVLGRPTTLFETMGKADIWLMRNSWSFQFPHPFLPNIDFVGGLHCKPAKPLPKEMEEFVQSSGENGVVVFSLGSVISNMTAERANVIATALAKIPQKVLWRFDGNKPDALGLNTRLYKWIPQNDLLGLPKTRAFITHGGANGIYEAIYHGIPMVGIPLFWDQPDNIAHMKAKGAAVRLDFHTMSSTDLLNALKTVINDPSYKENVMKLSIIQHDQPVKPLHRAVFWIEFVMCHKGAKHLRVAARDLTWFQYHSLDVIGFLLACVATVIFVVTKFCLFCFWKFARKGKKGKRD.

Residues 1-24 (MALKWTSVLLLIHLGCYFSSGSCG) form the signal peptide. The residue at position 135 (K135) is an N6-succinyllysine. N315 carries N-linked (GlcNAc...) asparagine glycosylation. Residues 495–517 (GFLLACVATVIFVVTKFCLFCFW) traverse the membrane as a helical segment.

Belongs to the UDP-glycosyltransferase family. In terms of tissue distribution, expressed in the liver, breast and kidney.

It localises to the endoplasmic reticulum membrane. The protein localises to the cytoplasm. The protein resides in the perinuclear region. It catalyses the reaction glucuronate acceptor + UDP-alpha-D-glucuronate = acceptor beta-D-glucuronoside + UDP + H(+). UDP-glucuronosyltransferase (UGT) that catalyzes phase II biotransformation reactions in which lipophilic substrates are conjugated with glucuronic acid to increase the metabolite's water solubility, thereby facilitating excretion into either the urine or bile. Essential for the elimination and detoxification of drugs, xenobiotics and endogenous compounds. Catalyzes the glucuronidation of endogenous steroid hormones such as androgens (androsterone, 3alpha-androstanediol) and estrogens (estradiol, estrone). Catalyzes the glucuronidation of bile acid substrates, which are natural detergents for dietary lipids absorption. Displays glucuronidation activity toward the phenolic compounds eugenol. Its function is as follows. Lack UDP-glucuronosyltransferase (UGT) activity. This is UDP-glucuronosyltransferase 2B28 from Homo sapiens (Human).